The following is a 180-amino-acid chain: Segregation and condensation protein B (180 aa).

It belongs to the ScpB family. Homodimer. Homodimerization may be required to stabilize the binding of ScpA to the Smc head domains. Component of a cohesin-like complex composed of ScpA, ScpB and the Smc homodimer, in which ScpA and ScpB bind to the head domain of Smc. The presence of the three proteins is required for the association of the complex with DNA.

It is found in the cytoplasm. Functionally, participates in chromosomal partition during cell division. May act via the formation of a condensin-like complex containing Smc and ScpA that pull DNA away from mid-cell into both cell halves. This chain is Segregation and condensation protein B, found in Staphylococcus aureus (strain Mu3 / ATCC 700698).